Reading from the N-terminus, the 57-residue chain is Sperm histone (57 aa).

The disordered stretch occupies residues Met-1–Tyr-57. A Phosphothreonine modification is found at Thr-9.

It belongs to the protamine P1 family. Testis.

It localises to the nucleus. Its subcellular location is the chromosome. Protamines substitute for histones in the chromatin of sperm during the haploid phase of spermatogenesis. They compact sperm DNA into a highly condensed, stable and inactive complex. The sequence is that of Sperm histone from Coturnix japonica (Japanese quail).